The following is a 58-amino-acid chain: Cecropin-B (58 aa).

Residues 1–21 (ILSFVFACLLALSAVSAAPEP) form the signal peptide.

The protein belongs to the cecropin family.

The protein resides in the secreted. Its function is as follows. Cecropins have lytic and antibacterial activity against several Gram-positive and Gram-negative bacteria. The sequence is that of Cecropin-B (CECB) from Spodoptera litura (Asian cotton leafworm).